Here is a 310-residue protein sequence, read N- to C-terminus: tRNA dimethylallyltransferase (310 aa).

5 to 12 (GPTASGKS) lines the ATP pocket. Substrate is bound at residue 7 to 12 (TASGKS). The interaction with substrate tRNA stretch occupies residues 30–33 (DSMQ).

This sequence belongs to the IPP transferase family. As to quaternary structure, monomer. The cofactor is Mg(2+).

The enzyme catalyses adenosine(37) in tRNA + dimethylallyl diphosphate = N(6)-dimethylallyladenosine(37) in tRNA + diphosphate. Its function is as follows. Catalyzes the transfer of a dimethylallyl group onto the adenine at position 37 in tRNAs that read codons beginning with uridine, leading to the formation of N6-(dimethylallyl)adenosine (i(6)A). This chain is tRNA dimethylallyltransferase, found in Rhodopseudomonas palustris (strain HaA2).